The chain runs to 90 residues: Acyl-CoA-binding protein homolog (90 aa).

The 87-residue stretch at 3-89 (LQEQFDQAAS…VESLIASLGL (87 aa)) folds into the ACB domain. An acyl-CoA is bound by residues Arg15, 30–34 (YALFK), Lys53, Lys57, and Tyr76.

This sequence belongs to the ACBP family.

Its function is as follows. Binds medium- and long-chain acyl-CoA esters with very high affinity and may function as an intracellular carrier of acyl-CoA esters. This Manduca sexta (Tobacco hawkmoth) protein is Acyl-CoA-binding protein homolog.